The chain runs to 2567 residues: MGSLGPDSQSRWASEPIAIIGMSSKFAGDATNTDKLWQMLAEGRSGWTEFPASRFRSEGVYHPNNERLNTTHVKGAHFLQEDVGLFDAAFFSYSSETASSLDPQYRLQLESAYEALENAGIPLTQIAGSNTSVFTGVFVHDYRDALLRDADNLPRLMATGTGVPMMSNRISHFFDLRGASMTIETACSSGMVATHQGIQSLRTGEADMSIVGGANLTLNPDMFKALGSAGFLSADGKSYAFDSRASGYGRGEGVATIVMKRLSDALAAGDPIRAVIRSSLLNQDGKTETITTPSLEAQIDLIRQCYARAGLDPRDTQYFEAHGTGTQAGDTVEARAIATVFSHNQDPLLIGSIKTNIGHTEAASGLASIIKTALALEKGVIPASINFEKPNPKLSLEDWHLKLVRQLQEWPAASTRRASINNFGYGGANAHIILEDGASWTPSPVEGTSSKEPIDTGSRVLVLSGKDEQACRTMISNLAEYLQRVASAEDEPSRLLDSLAYTLGQRRTRFPWVAAHPVPVTEGIGAVVNTLQSPKFKPYRSSRRPRIGMVFTGQGAQWWAMGRELRDAYPVYKASLDEADAYIRQFGADWSLVEELSRDAASSRINESGLSTPICVAVQISLVRLLESWGVVPAAVTSHSSGEIAAAYTVGALSYKDAMAYAYHRAVLAADTSLRGPVKGGMLAIGLGREDTEAYLKRLTTGGKAMVACVNSPSSTTVSGDLSAVQELEELANADGVFARLLKVETAWHSHHMTAIANVYVEALDNIKRKNSRNESSIAYSSPVTGGRVANIEEVARPEHWVKSLVQPVQFVDAFTDMVLGNPNGSANVDVVVEVGPHTALGGPIQQILALPAFKGLQIPYYGCLVRKADAKDTMQALAANLLQQGYPLDMDAVNFPHGRGSRVRVLTGLPSYPWNHQVKHWVEPRFNRALRERSVPPHHLLGSLVEGTNLEEPTWRHTLRISESPWTRDHAIQSNVVYPAAGYICLAIEATKQLHALNHTKAGAKEVSGYRLRDVDFLQALMIPDTSDGIEIQTSLRPVNDKDVAIQGWKHFEVWTVTGDNRWTQHAKGLISIEFEASAQVYEPKLGEFTIKGYKRQIPPAQLFANLKALGIGHGPVFQNMSHIVQSGFDRRSVVLTTVPDTSVPNDLPREHVLHPVTLDSFITSPYSAVPGAAGRETAAKVPRSVKSFWVSSNISHSPEHVFKAHSHIIRDDKHGMEADVIVANDGVDDNNVLLEMKGFSYQSLGRSVSLQHTEPWESQLCSSIHWRPDISIKLPATVSLVKQELSSNSNSAEAGGVEISSLCLYFIQKALASLSDSDFTNGSHYSKYYAWMKSAAQQAAITDIDEEHIDQIAKAQADGEMIRLLGKQLVSILRGQSTPTEIMEQDKNLLSRFYSETPRAKRTSSQLSGLLRHLVHKNPRARILEIGASTGGITGSALGVLDTATSGGPHASLYHYTDLSDRNFDAAREGFAAWSDILAFDVLDIERDPADQGFTVGSYDVVIASHAFSSTSSAIAGVLENVRSLLKPGGTLLFTEDFKPSIDVQFVKGLFPSWWSSERFSEQHVEPSPLLSVPLWDRSLRHAGFTGIDIELRDSDDVDASVSATIMSTLPPHPAGQSDIDAGKVVIVTSEQAGIPPSEWLKALQHSIASYSKAVNGAEGKVLPSVQSIESAAATAAWYADKICIFIGEINEPILYNLDAASLEGIKAMSTGCKGLLWVTRGGAVDCERPEVSLATGFVRTLRNEYVGRKFITLDLSPKGSLWQESGHEAIAQVLQNAFGQSLPGHSSGPDKGPVELEYAERDGVILIPRVYHDVAKDNAITPKTLESEEDTQGITTVEPFYQQHRPLCFLPELLVFGDDASAAVYRDTLPPRLVEIMPRAYGAGLNPADRTITGQECSGIITRVGIEASKHGYSVGDRVVCLLQQSSFTSRAVVDWTSVVQMPSRLSFQQAASLPAAFLVAYFSLVETARLKTSQSVLIHNAAGSIGQAAIMVAKHIGATVFTTVASPKQRDLLTREHGIPSHQIFDSNNASFGTAVTAATNGRGVDVVLNSLTGPLLQTSFNLVAPLGHFIEVGKYDSLANSNLEMLPFTRGVSFSAVDVPSLLQHRGSDVHRCLEEVMRLFELEALAPVSPVIEHNIGDIAQVSRLIQTEEETGKRVLSVAQDEMVSVLPHTAPAATLSPDASYLIVGGNGGLGQAVAHWMVSRGAKNLVLLSRSAGQSPKMAVLAEELRDAGCHRVLPVSCDVAKEDDLARAMDTCAREGLPPIRGVVHAAFVLHDSFVENMTLDDYKYTIQSKVSGAWNLHNQFNLPGDLDFFVLFSSINGILGYASQAAYSAAGAYEDALAHWRVKHKGLPAVSIDLSLVDGVGYVAEASAAEAMRKSLIKAGRRVINEEQVLASLELAIVSPYDPQFILGGINSGPGPHWDVDGDLGRDMRLLALKYRQPAAADGHDDEDSKAANGGDSLSAKIASASSRDEAISVVGSAVAAMLADMFLVSVEEVDLNDSPSQQGIDSLVAVEVRNMLFSQAGAELSIFNIMQSPSLAQLVANVVDRSTFAKFAKSS.

The region spanning 14–436 (SEPIAIIGMS…GANAHIILED (423 aa)) is the Ketosynthase family 3 (KS3) domain. Residues cysteine 187, histidine 322, and histidine 359 each act as for beta-ketoacyl synthase activity in the active site. The segment at 550-841 (VFTGQGAQWW…VVEVGPHTAL (292 aa)) is malonyl-CoA:ACP transacylase (MAT) domain. The segment at 939–1079 (HHLLGSLVEG…GLISIEFEAS (141 aa)) is N-terminal hotdog fold. Residues 939 to 1249 (HHLLGSLVEG…GFSYQSLGRS (311 aa)) form a dehydratase (DH) domain region. In terms of domain architecture, PKS/mFAS DH spans 939 to 1252 (HHLLGSLVEG…YQSLGRSVSL (314 aa)). Histidine 971 acts as the Proton acceptor; for dehydratase activity in catalysis. The C-terminal hotdog fold stretch occupies residues 1095–1252 (YKRQIPPAQL…YQSLGRSVSL (158 aa)). The Proton donor; for dehydratase activity role is filled by aspartate 1161. The methyltransferase (CMet) domain stretch occupies residues 1426 to 1534 (LEIGASTGGI…RSLLKPGGTL (109 aa)). The tract at residues 1852–2163 (FLPELLVFGD…TEEETGKRVL (312 aa)) is enoyl reductase (ER) domain. Residues 2187 to 2369 (ASYLIVGGNG…AVSIDLSLVD (183 aa)) form a ketoreductase (KR) domain region. The 78-residue stretch at 2481-2558 (EAISVVGSAV…QLVANVVDRS (78 aa)) folds into the Carrier domain. Serine 2518 bears the O-(pantetheine 4'-phosphoryl)serine mark.

Its pathway is secondary metabolite biosynthesis. Highly reducing polyketide synthase; part of the SOR gene cluster that mediates the biosynthesis of sorbicillinoids, a diverse group of yellow secondary metabolites that restrict growth of competing pathogenic fungi but not of bacteria. Sorbicillinoids biosynthesis requires the action of two PKSs. The SOR cluster is required for the production of trichodimerol and dihydrotrichotetronin, with sor2 being sufficient for production of trichodimerol, but not dihydrotrichotetronin in the light. Sor1 iteratively combines three acetyl units and the growing chain is modified by the ketoacyl reductase subunit, and optional by the enoyl reductase subunit in the second cycle. The polyketide is then handed over to the PKS sor2, which adds three more acetyl units, and two methyl groups. Sor2 releases an aldehyde, which undergoes spontaneous cyclization resulting in the formation of sorbicillin or 2',3'-dihydrosorbicillin. The monooxygenase sor5 oxidizes sorbicillin and 2',3'-dihydrosorbicillin to 2',3'-dihydrosorbicillinol and sorbicillinol, respectively. The oxidoreductase sor8 further converts sorbicillinol into oxosorbicillinol. Sorbicillinol is the building block for the other sorbicillinoids such as disorbicillinol, bisvertinolon, dihydrobisvertinolone, and dihydrotrichotetronine. The sequence is that of Highly reducing polyketide synthase sor1 from Hypocrea jecorina (strain QM6a) (Trichoderma reesei).